Reading from the N-terminus, the 82-residue chain is Putative membrane protein insertion efficiency factor (82 aa).

This sequence belongs to the UPF0161 family.

Its subcellular location is the cell membrane. Its function is as follows. Could be involved in insertion of integral membrane proteins into the membrane. The protein is Putative membrane protein insertion efficiency factor of Streptococcus thermophilus (strain ATCC BAA-491 / LMD-9).